Here is a 399-residue protein sequence, read N- to C-terminus: S-adenosylmethionine synthase (399 aa).

His-15 serves as a coordination point for ATP. Asp-17 contributes to the Mg(2+) binding site. Glu-43 is a K(+) binding site. Residues Glu-56 and Gln-99 each contribute to the L-methionine site. Residues 99–109 (QSPDIADGVDH) are flexible loop. ATP contacts are provided by residues 175 to 177 (DAK), 242 to 243 (RF), Asp-251, 257 to 258 (RK), Ala-274, and Lys-278. Asp-251 provides a ligand contact to L-methionine. Lys-282 serves as a coordination point for L-methionine.

The protein belongs to the AdoMet synthase family. As to quaternary structure, homotetramer; dimer of dimers. Requires Mg(2+) as cofactor. It depends on K(+) as a cofactor.

The protein resides in the cytoplasm. The enzyme catalyses L-methionine + ATP + H2O = S-adenosyl-L-methionine + phosphate + diphosphate. It functions in the pathway amino-acid biosynthesis; S-adenosyl-L-methionine biosynthesis; S-adenosyl-L-methionine from L-methionine: step 1/1. In terms of biological role, catalyzes the formation of S-adenosylmethionine (AdoMet) from methionine and ATP. The overall synthetic reaction is composed of two sequential steps, AdoMet formation and the subsequent tripolyphosphate hydrolysis which occurs prior to release of AdoMet from the enzyme. The polypeptide is S-adenosylmethionine synthase (Lactobacillus acidophilus (strain ATCC 700396 / NCK56 / N2 / NCFM)).